Reading from the N-terminus, the 231-residue chain is DNA mismatch repair protein MutH (231 aa).

The protein belongs to the MutH family.

The protein resides in the cytoplasm. Functionally, sequence-specific endonuclease that cleaves unmethylated GATC sequences. It is involved in DNA mismatch repair. This is DNA mismatch repair protein MutH from Salmonella paratyphi A (strain ATCC 9150 / SARB42).